The chain runs to 530 residues: Light-harvesting complex I LH38 proteins (530 aa).

The protein resides in the plastid. The protein localises to the chloroplast. This chain is Light-harvesting complex I LH38 proteins, found in Euglena gracilis.